The primary structure comprises 121 residues: Large ribosomal subunit protein bL12 (121 aa).

This sequence belongs to the bacterial ribosomal protein bL12 family. Homodimer. Part of the ribosomal stalk of the 50S ribosomal subunit. Forms a multimeric L10(L12)X complex, where L10 forms an elongated spine to which 2 to 4 L12 dimers bind in a sequential fashion. Binds GTP-bound translation factors.

Its function is as follows. Forms part of the ribosomal stalk which helps the ribosome interact with GTP-bound translation factors. Is thus essential for accurate translation. This is Large ribosomal subunit protein bL12 from Lactococcus lactis subsp. lactis (strain IL1403) (Streptococcus lactis).